The following is a 664-amino-acid chain: Chaperone protein DnaK (664 aa).

T201 is modified (phosphothreonine; by autocatalysis). Disordered stretches follow at residues 516–538 (DAEKHKEEDKKRREASDARNEAD) and 578–664 (APVE…KPND). The span at 578–592 (APVEKIKDASEELSR) shows a compositional bias: basic and acidic residues. 2 stretches are compositionally biased toward low complexity: residues 600–617 (AMQSQSASAAASSAANAQ) and 638–649 (AGNSASSNSNNE).

This sequence belongs to the heat shock protein 70 family.

Its function is as follows. Acts as a chaperone. The sequence is that of Chaperone protein DnaK from Chlamydia caviae (strain ATCC VR-813 / DSM 19441 / 03DC25 / GPIC) (Chlamydophila caviae).